The sequence spans 163 residues: Transcription antitermination protein NusB (163 aa).

The protein belongs to the NusB family.

In terms of biological role, involved in transcription antitermination. Required for transcription of ribosomal RNA (rRNA) genes. Binds specifically to the boxA antiterminator sequence of the ribosomal RNA (rrn) operons. In Mycolicibacterium vanbaalenii (strain DSM 7251 / JCM 13017 / BCRC 16820 / KCTC 9966 / NRRL B-24157 / PYR-1) (Mycobacterium vanbaalenii), this protein is Transcription antitermination protein NusB.